Reading from the N-terminus, the 86-residue chain is Large ribosomal subunit protein eL43 (86 aa).

The segment at 38 to 60 (CPFCGHKGKVYRLSTGVWACKKC) adopts a C4-type zinc-finger fold.

Belongs to the eukaryotic ribosomal protein eL43 family. Zn(2+) serves as cofactor.

The chain is Large ribosomal subunit protein eL43 from Desulfurococcus amylolyticus (strain DSM 18924 / JCM 16383 / VKM B-2413 / 1221n) (Desulfurococcus kamchatkensis).